Here is a 391-residue protein sequence, read N- to C-terminus: Elongation factor Tu (391 aa).

Residues 10-201 (KPHVNIGTVG…AVDEYIPTPE (192 aa)) form the tr-type G domain. Residues 19-26 (GHVDHGKT) form a G1 region. 19–26 (GHVDHGKT) provides a ligand contact to GTP. Threonine 26 provides a ligand contact to Mg(2+). The tract at residues 55–59 (GITIS) is G2. Residues 76–79 (DCPG) form a G3 region. GTP-binding positions include 76-80 (DCPGH) and 131-134 (NKVD). Residues 131-134 (NKVD) form a G4 region. The G5 stretch occupies residues 169 to 171 (SAL).

Belongs to the TRAFAC class translation factor GTPase superfamily. Classic translation factor GTPase family. EF-Tu/EF-1A subfamily. As to quaternary structure, monomer.

It localises to the cytoplasm. The enzyme catalyses GTP + H2O = GDP + phosphate + H(+). Functionally, GTP hydrolase that promotes the GTP-dependent binding of aminoacyl-tRNA to the A-site of ribosomes during protein biosynthesis. This is Elongation factor Tu from Ruegeria sp. (strain TM1040) (Silicibacter sp.).